The following is a 508-amino-acid chain: Photosystem II CP47 reaction center protein (508 aa).

Transmembrane regions (helical) follow at residues 21 to 36 (SVHI…WAGS), 101 to 115 (IVFS…IWHW), 140 to 156 (GIHL…FGAF), 203 to 218 (IAAG…FHLS), 237 to 252 (VLSS…AFVV), and 457 to 472 (TFAL…HGAR).

It belongs to the PsbB/PsbC family. PsbB subfamily. As to quaternary structure, PSII is composed of 1 copy each of membrane proteins PsbA, PsbB, PsbC, PsbD, PsbE, PsbF, PsbH, PsbI, PsbJ, PsbK, PsbL, PsbM, PsbT, PsbX, PsbY, PsbZ, Psb30/Ycf12, at least 3 peripheral proteins of the oxygen-evolving complex and a large number of cofactors. It forms dimeric complexes. The cofactor is Binds multiple chlorophylls. PSII binds additional chlorophylls, carotenoids and specific lipids..

It is found in the plastid. Its subcellular location is the chloroplast thylakoid membrane. Its function is as follows. One of the components of the core complex of photosystem II (PSII). It binds chlorophyll and helps catalyze the primary light-induced photochemical processes of PSII. PSII is a light-driven water:plastoquinone oxidoreductase, using light energy to abstract electrons from H(2)O, generating O(2) and a proton gradient subsequently used for ATP formation. This Chloranthus spicatus (Chulantree) protein is Photosystem II CP47 reaction center protein.